Here is a 117-residue protein sequence, read N- to C-terminus: Transcription elongation factor SPT4 (117 aa).

The segment at 1–40 (MSLETVPKDLRHLRACLLCSLVKTIDQFEYDGCDNCESYL) is interaction with SUPT5H. The C4-type zinc finger occupies 16-36 (CLLCSLVKTIDQFEYDGCDNC).

This sequence belongs to the SPT4 family. Interacts with SUPT5H to form the DSIF complex. DSIF interacts with RNA polymerase II and with the positive transcription elongation factor b complex (P-TEFb complex), which is composed of CDK9 and cyclin-T.

It is found in the nucleus. Its function is as follows. May function as a component of the DRB sensitivity-inducing factor complex (DSIF complex), which regulates transcription elongation by RNA polymerase II. Probably enhances transcriptional pausing at sites proximal to the promoter, which may facilitate the assembly of an elongation competent RNA polymerase II complex. Also acts to stimulate transcriptional elongation at low nucleotide concentrations. Regulation of transcriptional elongation by this protein is required for the expression of genes which control neuronal development. In Danio rerio (Zebrafish), this protein is Transcription elongation factor SPT4 (supt4h1).